The chain runs to 683 residues: DNA ligase (683 aa).

Residues 36–40 (DAVYD), 85–86 (SL), and E121 contribute to the NAD(+) site. The active-site N6-AMP-lysine intermediate is the K123. NAD(+) contacts are provided by R144, E180, K296, and K320. Residues C413, C416, C431, and C437 each contribute to the Zn(2+) site. A BRCT domain is found at 605–683 (PSEGHLSGKV…ESGWRVLAGL (79 aa)).

It belongs to the NAD-dependent DNA ligase family. LigA subfamily. Mg(2+) is required as a cofactor. It depends on Mn(2+) as a cofactor.

The enzyme catalyses NAD(+) + (deoxyribonucleotide)n-3'-hydroxyl + 5'-phospho-(deoxyribonucleotide)m = (deoxyribonucleotide)n+m + AMP + beta-nicotinamide D-nucleotide.. Its function is as follows. DNA ligase that catalyzes the formation of phosphodiester linkages between 5'-phosphoryl and 3'-hydroxyl groups in double-stranded DNA using NAD as a coenzyme and as the energy source for the reaction. It is essential for DNA replication and repair of damaged DNA. This Gluconobacter oxydans (strain 621H) (Gluconobacter suboxydans) protein is DNA ligase.